The following is a 27-amino-acid chain: Phospholipase A2 2 (27 aa).

The segment at 1 to 27 (FMKVIDPGTKWCGPGNKAADDTDNGKN) is disordered. Ca(2+) is bound by residues Trp-11, Gly-13, and Gly-15. A compositionally biased stretch (basic and acidic residues) spans 18–27 (AADDTDNGKN).

The protein belongs to the phospholipase A2 family. The cofactor is Ca(2+). As to expression, expressed by the venom gland.

The protein localises to the secreted. The enzyme catalyses a 1,2-diacyl-sn-glycero-3-phosphocholine + H2O = a 1-acyl-sn-glycero-3-phosphocholine + a fatty acid + H(+). Functionally, PLA2 catalyzes the calcium-dependent hydrolysis of the 2-acyl groups in 3-sn-phosphoglycerides. The protein is Phospholipase A2 2 of Opisthacanthus cayaporum (South American scorpion).